A 382-amino-acid polypeptide reads, in one-letter code: Lipid-A-disaccharide synthase (382 aa).

The protein belongs to the LpxB family.

The enzyme catalyses 2-N,3-O-bis[(3R)-3-hydroxytetradecanoyl]-alpha-D-glucosaminyl 1-phosphate + UDP-2-N,3-O-bis[(3R)-3-hydroxytetradecanoyl]-alpha-D-glucosamine = lipid A disaccharide (E. coli) + UDP + H(+). It carries out the reaction a lipid X + a UDP-2-N,3-O-bis[(3R)-3-hydroxyacyl]-alpha-D-glucosamine = a lipid A disaccharide + UDP + H(+). Its pathway is glycolipid biosynthesis; lipid IV(A) biosynthesis; lipid IV(A) from (3R)-3-hydroxytetradecanoyl-[acyl-carrier-protein] and UDP-N-acetyl-alpha-D-glucosamine: step 5/6. In terms of biological role, condensation of UDP-2,3-diacylglucosamine and 2,3-diacylglucosamine-1-phosphate to form lipid A disaccharide, a precursor of lipid A, a phosphorylated glycolipid that anchors the lipopolysaccharide to the outer membrane of the cell. This Escherichia coli (strain SMS-3-5 / SECEC) protein is Lipid-A-disaccharide synthase.